Consider the following 180-residue polypeptide: UPF0227 protein ECA1814 (180 aa).

This sequence belongs to the UPF0227 family.

The polypeptide is UPF0227 protein ECA1814 (Pectobacterium atrosepticum (strain SCRI 1043 / ATCC BAA-672) (Erwinia carotovora subsp. atroseptica)).